The primary structure comprises 265 residues: Ni-sirohydrochlorin a,c-diamide reductive cyclase complex, component CfbC (265 aa).

Belongs to the NifH/BchL/ChlL family. As to quaternary structure, homodimer. The Ni-sirohydrochlorin a,c-diamide reductive cyclase complex is composed of a NifH homolog component CfbC and a NifD homolog component CfbD. [4Fe-4S] cluster is required as a cofactor.

It catalyses the reaction Ni-sirohydrochlorin a,c-diamide + 3 AH2 + ATP + H2O = 15,17(3)-seco-F430-17(3)-acid + 3 A + ADP + phosphate. Functionally, involved in the biosynthesis of the unique nickel-containing tetrapyrrole coenzyme F430, the prosthetic group of methyl-coenzyme M reductase (MCR), which plays a key role in methanogenesis and anaerobic methane oxidation. Catalyzes both the six-electron reduction of the tetrahydroporphyrin ring system and the gamma-lactamization of the c-acetamide side chain of Ni-sirohydrochlorin a,c-diamide to yield 15,17(3)-seco-F430-17(3)-acid (seco-F430), the last intermediate in the biosynthesis of the coenzyme F430. The polypeptide is Ni-sirohydrochlorin a,c-diamide reductive cyclase complex, component CfbC (Methanosarcina barkeri (strain Fusaro / DSM 804)).